Consider the following 412-residue polypeptide: uncharacterized protein (412 aa).

Histidine 49 is a binding site for Zn(2+). The active-site Proton acceptor is glutamate 52. Zn(2+) is bound by residues histidine 53 and glutamate 129.

The protein belongs to the peptidase M16 family. Requires Zn(2+) as cofactor.

This is an uncharacterized protein from Rickettsia typhi (strain ATCC VR-144 / Wilmington).